A 598-amino-acid polypeptide reads, in one-letter code: UvrABC system protein C (598 aa).

The GIY-YIG domain maps to Ser-13 to Val-92. The region spanning Arg-206–Thr-241 is the UVR domain.

It belongs to the UvrC family. Interacts with UvrB in an incision complex.

It localises to the cytoplasm. Its function is as follows. The UvrABC repair system catalyzes the recognition and processing of DNA lesions. UvrC both incises the 5' and 3' sides of the lesion. The N-terminal half is responsible for the 3' incision and the C-terminal half is responsible for the 5' incision. In Chlamydia trachomatis serovar A (strain ATCC VR-571B / DSM 19440 / HAR-13), this protein is UvrABC system protein C.